The sequence spans 182 residues: WUSCHEL-related homeobox 5 (182 aa).

Positions 1-24 are disordered; that stretch reads MSFSVKGRSLRGNNNGGTGTKCGR. The segment at residues 20–84 is a DNA-binding region (homeobox; WUS-type); it reads TKCGRWNPTV…NHKARERQKR (65 aa).

It belongs to the WUS homeobox family. As to expression, specifically expressed in the central cells of a quiescent center (QC) of the root.

Its subcellular location is the nucleus. Transcription factor, which may be involved in the specification and maintenance of the stem cells (QC cells) in the root apical meristem (RAM). This chain is WUSCHEL-related homeobox 5 (WOX5), found in Arabidopsis thaliana (Mouse-ear cress).